Here is a 272-residue protein sequence, read N- to C-terminus: Shikimate dehydrogenase (NADP(+)) (272 aa).

Shikimate contacts are provided by residues 14–16 and threonine 61; that span reads SKS. Residue lysine 65 is the Proton acceptor of the active site. Residues asparagine 86 and aspartate 102 each contribute to the shikimate site. Residues 126–130, 150–155, and methionine 214 each bind NADP(+); these read GAGGA and NRTASK. Residue tyrosine 216 participates in shikimate binding. Glycine 239 lines the NADP(+) pocket.

It belongs to the shikimate dehydrogenase family. Homodimer.

It catalyses the reaction shikimate + NADP(+) = 3-dehydroshikimate + NADPH + H(+). The protein operates within metabolic intermediate biosynthesis; chorismate biosynthesis; chorismate from D-erythrose 4-phosphate and phosphoenolpyruvate: step 4/7. Involved in the biosynthesis of the chorismate, which leads to the biosynthesis of aromatic amino acids. Catalyzes the reversible NADPH linked reduction of 3-dehydroshikimate (DHSA) to yield shikimate (SA). The sequence is that of Shikimate dehydrogenase (NADP(+)) from Pseudoalteromonas atlantica (strain T6c / ATCC BAA-1087).